Consider the following 3620-residue polypeptide: Cubilin (3620 aa).

The first 20 residues, 1–20 (MSSPFLWSLIILLTFAESNG), serve as a signal peptide directing secretion. A propeptide spans 21 to 32 (EAGGFELQRQKR) (removed in mature form). The interval 39 to 46 (PRMATERG) is interaction with AMN. Residue asparagine 102 is glycosylated (N-linked (GlcNAc...) asparagine). In terms of domain architecture, EGF-like 1 spans 129-165 (DKKVCSSNPCQNGGTCLNLHDSFFCICPSQWKGPLCS). Disulfide bonds link cysteine 133/cysteine 144, cysteine 138/cysteine 153, cysteine 155/cysteine 164, cysteine 171/cysteine 187, cysteine 181/cysteine 196, and cysteine 198/cysteine 207. The 42-residue stretch at 167–208 (DVNECQIYSGTPLGCQNGATCENTAGSYSCLCSPETHGPQCA) folds into the EGF-like 2; calcium-binding domain. N-linked (GlcNAc...) asparagine glycosylation is present at asparagine 253. Residues 260–301 (DIDECNLQHAPCSPLVQCFNTQGSFYCGACPTGWQGNGYSCQ) enclose the EGF-like 3; calcium-binding domain. Intrachain disulfides connect cysteine 264–cysteine 277, cysteine 271–cysteine 286, cysteine 289–cysteine 300, cysteine 306–cysteine 321, cysteine 313–cysteine 330, cysteine 333–cysteine 344, cysteine 350–cysteine 363, cysteine 357–cysteine 373, cysteine 396–cysteine 406, cysteine 401–cysteine 415, cysteine 417–cysteine 426, cysteine 433–cysteine 444, cysteine 438–cysteine 453, cysteine 455–cysteine 464, cysteine 471–cysteine 497, cysteine 524–cysteine 546, cysteine 587–cysteine 613, cysteine 640–cysteine 662, and cysteine 705–cysteine 730. Residues 302-345 (DIDECKINNGGCSVVPPVMCVNTLGSYHCQACPPGYQGDGRVCT) enclose the EGF-like 4; calcium-binding domain. EGF-like domains are found at residues 346-382 (VIDI…YTGN) and 392-427 (LSDT…INCT). Asparagine 425 is a glycosylation site (N-linked (GlcNAc...) asparagine). In terms of domain architecture, EGF-like 7; calcium-binding spans 429-465 (NINECLSNPCFNGGTCVDGVNAFSCECTRFWTGFLCQ). CUB domains follow at residues 471 to 583 (CGGS…WETQ), 587 to 699 (CGGI…YLTS), 705 to 812 (CGGN…YQVA), 813 to 924 (CGGE…FSAA), 928 to 1038 (CGEI…YEAT), 1044 to 1158 (CMED…WDGS), 1162 to 1274 (CGGN…YQQT), 1275 to 1386 (CRNV…WFIH), 1388 to 1503 (CGGE…WQAV), 1507 to 1616 (CGGI…FNQV), 1617 to 1731 (CGGH…YAAS), 1735 to 1847 (CGGT…FTKI), and 1849 to 1960 (GNDN…WFAV). N-linked (GlcNAc...) asparagine glycans are attached at residues asparagine 708 and asparagine 745. A disulfide bridge connects residues cysteine 757 and cysteine 775. The N-linked (GlcNAc...) asparagine glycan is linked to asparagine 777. A disulfide bond links cysteine 813 and cysteine 838. Asparagine 853 is a glycosylation site (N-linked (GlcNAc...) asparagine). Disulfide bonds link cysteine 865-cysteine 887 and cysteine 928-cysteine 954. An N-linked (GlcNAc...) asparagine glycan is attached at asparagine 953. Position 976 (glutamate 976) interacts with Ca(2+). Asparagine 980 carries an N-linked (GlcNAc...) asparagine glycan. A disulfide bridge links cysteine 981 with cysteine 1001. Ca(2+) contacts are provided by aspartate 984, aspartate 1023, aspartate 1025, and leucine 1026. Residues cysteine 1044 and cysteine 1070 are joined by a disulfide bond. 3 residues coordinate Ca(2+): glutamate 1092, aspartate 1102, and aspartate 1143. A disulfide bond links cysteine 1099 and cysteine 1121. A disulfide bridge links cysteine 1162 with cysteine 1188. Asparagine 1165 is a glycosylation site (N-linked (GlcNAc...) asparagine). Glutamate 1210 lines the Ca(2+) pocket. Residue asparagine 1214 is glycosylated (N-linked (GlcNAc...) asparagine). Cysteines 1215 and 1237 form a disulfide. Ca(2+) contacts are provided by aspartate 1218, aspartate 1259, and glutamine 1262. A disulfide bridge connects residues cysteine 1275 and cysteine 1303. 2 N-linked (GlcNAc...) asparagine glycosylation sites follow: asparagine 1304 and asparagine 1316. Position 1325 (glutamate 1325) interacts with Ca(2+). An N-linked (GlcNAc...) asparagine glycan is attached at asparagine 1329. Cysteine 1330 and cysteine 1348 form a disulfide bridge. 3 residues coordinate Ca(2+): aspartate 1333, aspartate 1370, and valine 1372. Cystine bridges form between cysteine 1388–cysteine 1414 and cysteine 1441–cysteine 1463. Asparagine 1497 carries an N-linked (GlcNAc...) asparagine glycan. Residues cysteine 1507 and cysteine 1533 are joined by a disulfide bond. The N-linked (GlcNAc...) asparagine glycan is linked to asparagine 1548. 5 cysteine pairs are disulfide-bonded: cysteine 1560–cysteine 1578, cysteine 1617–cysteine 1644, cysteine 1672–cysteine 1694, cysteine 1735–cysteine 1761, and cysteine 1788–cysteine 1809. N-linked (GlcNAc...) asparagine glycosylation is present at asparagine 1643. N-linked (GlcNAc...) asparagine glycans are attached at residues asparagine 1799, asparagine 1816, and asparagine 1882. A disulfide bond links cysteine 1902 and cysteine 1924. Asparagine 1961 carries N-linked (GlcNAc...) asparagine glycosylation. Intrachain disulfides connect cysteine 1975–cysteine 2003 and cysteine 2029–cysteine 2051. CUB domains lie at 1975–2088 (CGGF…FHKS), 2089–2210 (CGGY…YEAK), 2214–2331 (CGGN…YAIA), 2333–2445 (CGGR…FESS), 2449–2562 (CGGE…YTSS), 2567–2684 (CGGS…YSFT), 2686–2798 (CGGI…WNTQ), 2802–2916 (CGGI…FVSR), 2917–3032 (CGGN…YKIT), 3034–3147 (CGGV…FQQT), 3154–3271 (CGGY…YTTV), 3275–3392 (CGGT…IAGC), 3392–3504 (CNRE…WTSS), and 3508–3620 (CGGT…TWDS). Residues asparagine 2082 and asparagine 2114 are each glycosylated (N-linked (GlcNAc...) asparagine). 3 cysteine pairs are disulfide-bonded: cysteine 2089-cysteine 2115, cysteine 2214-cysteine 2244, and cysteine 2272-cysteine 2294. N-linked (GlcNAc...) asparagine glycosylation is present at asparagine 2317. A disulfide bridge links cysteine 2333 with cysteine 2360. Residues asparagine 2383 and asparagine 2397 are each glycosylated (N-linked (GlcNAc...) asparagine). Cystine bridges form between cysteine 2387–cysteine 2408, cysteine 2449–cysteine 2475, and cysteine 2502–cysteine 2524. N-linked (GlcNAc...) asparagine glycosylation is found at asparagine 2528, asparagine 2578, asparagine 2589, and asparagine 2607. Residues cysteine 2567 and cysteine 2596 are joined by a disulfide bond. 7 disulfides stabilise this stretch: cysteine 2625–cysteine 2646, cysteine 2686–cysteine 2712, cysteine 2739–cysteine 2761, cysteine 2802–cysteine 2828, cysteine 2857–cysteine 2880, cysteine 2917–cysteine 2943, and cysteine 2974–cysteine 2996. The N-linked (GlcNAc...) asparagine glycan is linked to asparagine 2810. 3 N-linked (GlcNAc...) asparagine glycosylation sites follow: asparagine 2920, asparagine 2942, and asparagine 2986. Threonine 3005 is subject to Phosphothreonine. Cystine bridges form between cysteine 3034–cysteine 3061 and cysteine 3088–cysteine 3110. Residues asparagine 3039, asparagine 3100, and asparagine 3122 are each glycosylated (N-linked (GlcNAc...) asparagine). Disulfide bonds link cysteine 3154/cysteine 3182 and cysteine 3212/cysteine 3234. Asparagine 3265, asparagine 3280, and asparagine 3292 each carry an N-linked (GlcNAc...) asparagine glycan. Intrachain disulfides connect cysteine 3275–cysteine 3303 and cysteine 3329–cysteine 3351. The N-linked (GlcNAc...) asparagine glycan is linked to asparagine 3354. Cysteine 3392 and cysteine 3418 are joined by a disulfide. N-linked (GlcNAc...) asparagine glycosylation is found at asparagine 3427, asparagine 3454, and asparagine 3530. 3 disulfide bridges follow: cysteine 3445-cysteine 3467, cysteine 3508-cysteine 3534, and cysteine 3561-cysteine 3583.

In terms of assembly, interacts with AMN. Component of the cubam complex composed of one CUBN trimer and one AMN chain. The cubam complex can dimerize. Interacts with LRP2 in a dual-receptor complex in a calcium-dependent manner. Found in a complex with PID1/PCLI1, LRP1 and CUBNI. Interacts with LRP1 and PID1/PCLI1. Post-translationally, the precursor is cleaved by a trans-Golgi proteinase furin, removing a propeptide. In terms of processing, N-glycosylated. Detected in kidney cortex (at protein level). Detected in kidney, duodenum and jejunum.

The protein localises to the apical cell membrane. The protein resides in the cell membrane. It is found in the membrane. It localises to the coated pit. Its subcellular location is the endosome. The protein localises to the lysosome membrane. Its function is as follows. Endocytic receptor which plays a role in lipoprotein, vitamin and iron metabolism by facilitating their uptake. Acts together with LRP2 to mediate endocytosis of high-density lipoproteins, GC, hemoglobin, ALB, TF and SCGB1A1. Acts together with AMN to mediate endocytosis of the CBLIF-cobalamin complex. Binds to ALB, MB, Kappa and lambda-light chains, TF, hemoglobin, GC, SCGB1A1, APOA1, high density lipoprotein, and the CBLIF-cobalamin complex. Ligand binding requires calcium. Serves as important transporter in several absorptive epithelia, including intestine, renal proximal tubules and embryonic yolk sac. May play an important role in the development of the peri-implantation embryo through internalization of APOA1 and cholesterol. Binds to LGALS3 at the maternal-fetal interface. This Canis lupus familiaris (Dog) protein is Cubilin (CUBN).